Here is a 569-residue protein sequence, read N- to C-terminus: Peroxynitrite isomerase THAP4 (569 aa).

Residues 1-85 (MVICCAAVNC…LKPTAVPSIF (85 aa)) form a THAP-type zinc finger. A disordered region spans residues 88–216 (SEKKRGAGGH…DKSGISMDDF (129 aa)). Polar residues-rich tracts occupy residues 121 to 130 (IGSSLSSSDN) and 157 to 167 (AVSQEQGQSLE). Phosphoserine is present on Ser159. Positions 230 to 233 (LHSY) match the HCFC1-binding motif (HBM) motif. Ser234 is subject to Phosphoserine. Residues 235 to 312 (FSSKHTRERP…EAVQSEHSDA (78 aa)) form a disordered region. Residues 242–262 (ERPSVPREPMDRKRLKREMEP) show a composition bias toward basic and acidic residues. The span at 265–279 (SGNSVAQSPPSSSLT) shows a compositional bias: polar residues. Residues 280–289 (ATPQKASQSP) are compositionally biased toward low complexity. Positions 407–569 (PPKLNPVVEP…LHITYKKVTP (163 aa)) are nitrobindin. Residues Thr436 and His559 each coordinate heme b.

It in the C-terminal section; belongs to the nitrobindin family. In terms of assembly, homodimer. Requires heme b as cofactor.

The protein resides in the cytoplasm. The protein localises to the nucleus. The catalysed reaction is peroxynitrite = nitrate. It functions in the pathway nitrogen metabolism. Heme-binding protein able to scavenge peroxynitrite and to protect free L-tyrosine against peroxynitrite-mediated nitration, by acting as a peroxynitrite isomerase that converts peroxynitrite to nitrate. Therefore, this protein likely plays a role in peroxynitrite sensing and in the detoxification of reactive nitrogen and oxygen species (RNS and ROS, respectively). Is able to bind nitric oxide (NO) in vitro, but may act as a sensor of peroxynitrite levels in vivo, possibly modulating the transcriptional activity residing in the N-terminal region. The polypeptide is Peroxynitrite isomerase THAP4 (Mus musculus (Mouse)).